Reading from the N-terminus, the 239-residue chain is Uridylate kinase (239 aa).

10–13 is a binding site for ATP; the sequence is KFSG. The interval 18–23 is involved in allosteric activation by GTP; sequence GENGFG. Glycine 52 is a binding site for UMP. ATP contacts are provided by glycine 53 and arginine 57. UMP-binding positions include aspartate 73 and 134-141; that span reads TGNPYFTT. Threonine 161, tyrosine 167, and aspartate 170 together coordinate ATP.

It belongs to the UMP kinase family. In terms of assembly, homohexamer.

It is found in the cytoplasm. The catalysed reaction is UMP + ATP = UDP + ADP. It participates in pyrimidine metabolism; CTP biosynthesis via de novo pathway; UDP from UMP (UMPK route): step 1/1. Allosterically activated by GTP. Inhibited by UTP. Functionally, catalyzes the reversible phosphorylation of UMP to UDP. This Campylobacter jejuni subsp. doylei (strain ATCC BAA-1458 / RM4099 / 269.97) protein is Uridylate kinase.